Reading from the N-terminus, the 177-residue chain is FANCD2 opposite strand protein (177 aa).

The protein is FANCD2 opposite strand protein (FANCD2OS) of Homo sapiens (Human).